The primary structure comprises 364 residues: Chorismate synthase (364 aa).

The NADP(+) site is built by arginine 48 and arginine 54. Residues 125 to 127 (RSS), 238 to 239 (NA), glycine 278, 293 to 297 (KPTSS), and arginine 319 contribute to the FMN site.

This sequence belongs to the chorismate synthase family. In terms of assembly, homotetramer. FMNH2 is required as a cofactor.

It catalyses the reaction 5-O-(1-carboxyvinyl)-3-phosphoshikimate = chorismate + phosphate. It functions in the pathway metabolic intermediate biosynthesis; chorismate biosynthesis; chorismate from D-erythrose 4-phosphate and phosphoenolpyruvate: step 7/7. Catalyzes the anti-1,4-elimination of the C-3 phosphate and the C-6 proR hydrogen from 5-enolpyruvylshikimate-3-phosphate (EPSP) to yield chorismate, which is the branch point compound that serves as the starting substrate for the three terminal pathways of aromatic amino acid biosynthesis. This reaction introduces a second double bond into the aromatic ring system. This is Chorismate synthase from Shewanella sediminis (strain HAW-EB3).